A 945-amino-acid polypeptide reads, in one-letter code: Kinesin-like protein KIN-UA (945 aa).

Residues 1-54 form a disordered region; that stretch reads MAANGRASVRPVERHGAPPRPAGRSRSVAPPSRRPSPSPSRARPAAADNDGGSD. Positions 22 to 31 are enriched in low complexity; the sequence is AGRSRSVAPP. Residues 57 to 399 enclose the Kinesin motor domain; the sequence is RVRVAVRLRP…IMFGQRAMKI (343 aa). 142-149 is a binding site for ATP; it reads GQTGTGKT. The D-BOX motif lies at 369–377; sequence RTSLIVTIG. Residues 415–644 are a coiled coil; it reads YKKVEHEVDH…ILRLKQSLAD (230 aa). ARM repeat units follow at residues 683–722, 724–764, 766–806, and 808–847; these read RSNISKIFEEVGLPNVLALLKSDELEVQIHAVKVVANLAA, DVNQ…NLAM, GSNQ…NLCG, and EKLHVMLKQDGGIKALLGMFRTGHNEVIAQIARGMANFAK.

It belongs to the TRAFAC class myosin-kinesin ATPase superfamily. Kinesin family. Ungrouped subfamily.

It localises to the cytoplasm. The protein resides in the cytoskeleton. The polypeptide is Kinesin-like protein KIN-UA (Oryza sativa subsp. japonica (Rice)).